The following is a 60-amino-acid chain: MTTQQTVKIQLVRSPIGTKESHRATVRGLGLRKLNSVSQLQDTPEVRGMINKISYLLKVL.

Belongs to the universal ribosomal protein uL30 family. In terms of assembly, part of the 50S ribosomal subunit.

The chain is Large ribosomal subunit protein uL30 from Verminephrobacter eiseniae (strain EF01-2).